Consider the following 358-residue polypeptide: DNA polymerase IV (358 aa).

One can recognise a UmuC domain in the interval 4–185 (IIHIDMDCYF…LSLRKIPGVG (182 aa)). Mg(2+) contacts are provided by D8 and D103. E104 is an active-site residue.

Belongs to the DNA polymerase type-Y family. As to quaternary structure, monomer. It depends on Mg(2+) as a cofactor.

It localises to the cytoplasm. It catalyses the reaction DNA(n) + a 2'-deoxyribonucleoside 5'-triphosphate = DNA(n+1) + diphosphate. Its function is as follows. Poorly processive, error-prone DNA polymerase involved in untargeted mutagenesis. Copies undamaged DNA at stalled replication forks, which arise in vivo from mismatched or misaligned primer ends. These misaligned primers can be extended by PolIV. Exhibits no 3'-5' exonuclease (proofreading) activity. May be involved in translesional synthesis, in conjunction with the beta clamp from PolIII. The chain is DNA polymerase IV from Shewanella baltica (strain OS195).